The chain runs to 250 residues: Small ribosomal subunit protein uS3 (250 aa).

The region spanning 39–109 is the KH type-2 domain; the sequence is IRNYVQARLK…EVKIDVVEVI (71 aa). The span at 225-239 shows a compositional bias: basic and acidic residues; it reads INERRGDSKSRPRDP. Positions 225–250 are disordered; it reads INERRGDSKSRPRDPRNKRRRRTKRS. Over residues 240 to 250 the composition is skewed to basic residues; the sequence is RNKRRRRTKRS.

This sequence belongs to the universal ribosomal protein uS3 family. Part of the 30S ribosomal subunit. Forms a tight complex with proteins S10 and S14.

Binds the lower part of the 30S subunit head. Binds mRNA in the 70S ribosome, positioning it for translation. This is Small ribosomal subunit protein uS3 from Chlorobium phaeobacteroides (strain DSM 266 / SMG 266 / 2430).